Here is a 414-residue protein sequence, read N- to C-terminus: 5-aminolevulinate synthase (414 aa).

3 residues coordinate substrate: arginine 22, serine 133, and lysine 152. Pyridoxal 5'-phosphate-binding residues include serine 185, histidine 213, and threonine 241. Residue lysine 244 is part of the active site. Lysine 244 is modified (N6-(pyridoxal phosphate)lysine). Threonine 273 and threonine 274 together coordinate pyridoxal 5'-phosphate. Residue threonine 359 participates in substrate binding.

The protein belongs to the class-II pyridoxal-phosphate-dependent aminotransferase family. In terms of assembly, homodimer. The cofactor is pyridoxal 5'-phosphate.

The enzyme catalyses succinyl-CoA + glycine + H(+) = 5-aminolevulinate + CO2 + CoA. The protein operates within porphyrin-containing compound metabolism; protoporphyrin-IX biosynthesis; 5-aminolevulinate from glycine: step 1/1. This Rickettsia conorii (strain ATCC VR-613 / Malish 7) protein is 5-aminolevulinate synthase (hemA).